Reading from the N-terminus, the 476-residue chain is MSSLLPPLGAVLPELLLALSAVVLVLIGAIQGEKSANLVNGLAIAALVAAGVLVMLQPAVTIAGFNGSMLVDPFARFMKVVALLGAAVSLIMSVDWLNRAQQAKFEYAVLVVLASLGICILISAGDLIALYLGLELMSLSLYVVAAINRDSVRSTEAGLKYFVLGALSSGMLLYGASLIYGFTGTVNFAGIAKVATAPTTGLVFGIVFLFAGLCFKVSAVPFHMWTPDVYEGAPTPVTAFFATAPKVAAMAVFVRVAVEALPHVTHSWQQIVTFVSIASMALGAFAAIGQRNIKRLLAYSSIGHMGFALVGLAAGTEQGVTGVLLYMAIYVVMTLGSFTCVLAMRRDGRSVETIEDLAGLARTKPLMALALAALMFSLAGIPPLAGFVAKYYVFLAAIQAGLYGLAVIGVVASVVGAYYYLRVVKIMYFDEPAEAFDGMPGELKAVLAVSGLFTTFFFLAPTPLIAAAGAAARALF.

Transmembrane regions (helical) follow at residues 10-30, 42-62, 77-97, 108-128, 129-149, 162-182, 202-222, 234-254, 268-288, 296-316, 323-343, 368-388, 392-412, and 445-465; these read AVLPELLLALSAVVLVLIGAI, LAIAALVAAGVLVMLQPAVTI, FMKVVALLGAAVSLIMSVDWL, AVLVVLASLGICILISAGDLI, ALYLGLELMSLSLYVVAAINR, FVLGALSSGMLLYGASLIYGF, LVFGIVFLFAGLCFKVSAVPF, PTPVTAFFATAPKVAAMAVFV, WQQIVTFVSIASMALGAFAAI, LLAYSSIGHMGFALVGLAAGT, VLLYMAIYVVMTLGSFTCVLA, ALALAALMFSLAGIPPLAGFV, YVFLAAIQAGLYGLAVIGVVA, and AVLAVSGLFTTFFFLAPTPLI.

It belongs to the complex I subunit 2 family. NDH-1 is composed of 14 different subunits. Subunits NuoA, H, J, K, L, M, N constitute the membrane sector of the complex.

The protein resides in the cell inner membrane. It carries out the reaction a quinone + NADH + 5 H(+)(in) = a quinol + NAD(+) + 4 H(+)(out). NDH-1 shuttles electrons from NADH, via FMN and iron-sulfur (Fe-S) centers, to quinones in the respiratory chain. The immediate electron acceptor for the enzyme in this species is believed to be ubiquinone. Couples the redox reaction to proton translocation (for every two electrons transferred, four hydrogen ions are translocated across the cytoplasmic membrane), and thus conserves the redox energy in a proton gradient. In Azorhizobium caulinodans (strain ATCC 43989 / DSM 5975 / JCM 20966 / LMG 6465 / NBRC 14845 / NCIMB 13405 / ORS 571), this protein is NADH-quinone oxidoreductase subunit N.